Consider the following 575-residue polypeptide: MHRFATGLASKARLARNGANQIASRSNWRRNYAAKDVKFGVEARGLMLKGVEDLADAVKVTMGPKGRTVVIEQSFGAPKVTKDGVTVAKSIEFKDKVKNVGASLVKQVANATNDVAGDGTTCATILTKAIFTEGCKSVASGMNAMDLRRGISMAVDSVVTNLKSRARMISTSEEIAQVGTISANGEREIGELIAKAMEKVGKEGVITISDGKTMDNELEVVEGMKLDRGYISPYFITNQKNQKCELDDPLIIIYEKKISSINAVVKVLELALKKQRPLLIVSEDVESEALATLILNKLRAGIKVCAIKAPGFGENRKAGLQDLAVLTGGQVITEELGMNLEKVDLDMLGSCKKITISKDDTVILDGAGDKKAIEERCDQIRSGIEASTSDYDKEKLQERLAKLSGGVAVLKIGGASEAEVGEKKDRVTDALNATKAAVEEGIVPGGGVALLYASKELDKLPTANFDQKIGVQIIQNALKTPVHTIASNAGVEGAVVVGKLLEQDDPDLGYDAAKGEYVDMVKAGIIDPLKVIRTALVDAASVSSLMTTTEVVVVELPKDENEVPAMGGGMGGMDY.

The N-terminal 32 residues, 1 to 32, are a transit peptide targeting the mitochondrion; sequence MHRFATGLASKARLARNGANQIASRSNWRRNY.

This sequence belongs to the chaperonin (HSP60) family.

It localises to the mitochondrion. In terms of biological role, implicated in mitochondrial protein import and macromolecular assembly. May facilitate the correct folding of imported proteins. May also prevent misfolding and promote the refolding and proper assembly of unfolded polypeptides generated under stress conditions in the mitochondrial matrix. The sequence is that of Chaperonin CPN60-1, mitochondrial (CPN60-1) from Cucurbita maxima (Pumpkin).